The following is a 195-amino-acid chain: Thymidine kinase (195 aa).

Residues 15-22 (GSMFSGKS) and 88-91 (DEVQ) contribute to the ATP site. Catalysis depends on E89, which acts as the Proton acceptor. 4 residues coordinate Zn(2+): C145, C148, C183, and C186.

Belongs to the thymidine kinase family. Homotetramer.

It is found in the cytoplasm. It catalyses the reaction thymidine + ATP = dTMP + ADP + H(+). The sequence is that of Thymidine kinase from Bacillus cereus (strain 03BB102).